Reading from the N-terminus, the 682-residue chain is DNA-directed RNA polymerase subunit beta' (682 aa).

Residues cysteine 69, cysteine 71, cysteine 87, and cysteine 90 each coordinate Zn(2+). 3 residues coordinate Mg(2+): aspartate 489, aspartate 491, and aspartate 493.

This sequence belongs to the RNA polymerase beta' chain family. RpoC1 subfamily. In terms of assembly, in plastids the minimal PEP RNA polymerase catalytic core is composed of four subunits: alpha, beta, beta', and beta''. When a (nuclear-encoded) sigma factor is associated with the core the holoenzyme is formed, which can initiate transcription. Mg(2+) serves as cofactor. Zn(2+) is required as a cofactor.

It is found in the plastid. It localises to the chloroplast. The enzyme catalyses RNA(n) + a ribonucleoside 5'-triphosphate = RNA(n+1) + diphosphate. Its function is as follows. DNA-dependent RNA polymerase catalyzes the transcription of DNA into RNA using the four ribonucleoside triphosphates as substrates. The polypeptide is DNA-directed RNA polymerase subunit beta' (Brachypodium distachyon (Purple false brome)).